Reading from the N-terminus, the 166-residue chain is Protein-export protein SecB (166 aa).

This sequence belongs to the SecB family. Homotetramer, a dimer of dimers. One homotetramer interacts with 1 SecA dimer.

The protein resides in the cytoplasm. Its function is as follows. One of the proteins required for the normal export of preproteins out of the cell cytoplasm. It is a molecular chaperone that binds to a subset of precursor proteins, maintaining them in a translocation-competent state. It also specifically binds to its receptor SecA. The sequence is that of Protein-export protein SecB from Actinobacillus pleuropneumoniae serotype 7 (strain AP76).